Here is a 481-residue protein sequence, read N- to C-terminus: UDP-N-acetylmuramoyl-L-alanyl-D-glutamate--L-lysine ligase (481 aa).

S42 contacts UDP-N-acetyl-alpha-D-muramoyl-L-alanyl-D-glutamate. 118 to 124 (GTKGKTT) is an ATP binding site. UDP-N-acetyl-alpha-D-muramoyl-L-alanyl-D-glutamate contacts are provided by residues 160–161 (TT), S187, and R195. An N6-carboxylysine modification is found at K229. The L-lysine recognition motif motif lies at 404-407 (DDPN).

The protein belongs to the MurCDEF family. MurE subfamily. Post-translationally, carboxylation is probably crucial for Mg(2+) binding and, consequently, for the gamma-phosphate positioning of ATP.

The protein resides in the cytoplasm. It catalyses the reaction UDP-N-acetyl-alpha-D-muramoyl-L-alanyl-D-glutamate + L-lysine + ATP = UDP-N-acetyl-alpha-D-muramoyl-L-alanyl-gamma-D-glutamyl-L-lysine + ADP + phosphate + H(+). The protein operates within cell wall biogenesis; peptidoglycan biosynthesis. Functionally, catalyzes the addition of L-lysine to the nucleotide precursor UDP-N-acetylmuramoyl-L-alanyl-D-glutamate (UMAG) in the biosynthesis of bacterial cell-wall peptidoglycan. The polypeptide is UDP-N-acetylmuramoyl-L-alanyl-D-glutamate--L-lysine ligase (Streptococcus suis (strain 98HAH33)).